The sequence spans 293 residues: Hydroxyquinol 1,2-dioxygenase (293 aa).

Residues Tyr-164, Tyr-197, His-221, and His-223 each coordinate Fe cation.

This sequence belongs to the intradiol ring-cleavage dioxygenase family. As to quaternary structure, homodimer. Fe(3+) serves as cofactor.

The catalysed reaction is benzene-1,2,4-triol + O2 = maleylacetate + 2 H(+). Its pathway is aromatic compound metabolism; beta-ketoadipate pathway; 3-oxoadipate from 3,4-dihydroxybenzoate: step 2/4. Its activity is regulated as follows. Inhibited by 3,5-dichlorocatechol, chlorohydroquinone and 4,5-dibromocatechol. In terms of biological role, catalyzes the ortho-cleavage of the aromatic ring of hydroxyquinol. This is Hydroxyquinol 1,2-dioxygenase (chqB) from Nocardioides simplex (Arthrobacter simplex).